The chain runs to 99 residues: DNA-directed RNA polymerase subunit omega (99 aa).

This sequence belongs to the RNA polymerase subunit omega family. In terms of assembly, the RNAP catalytic core consists of 2 alpha, 1 beta, 1 beta' and 1 omega subunit. When a sigma factor is associated with the core the holoenzyme is formed, which can initiate transcription.

The catalysed reaction is RNA(n) + a ribonucleoside 5'-triphosphate = RNA(n+1) + diphosphate. In terms of biological role, promotes RNA polymerase assembly. Latches the N- and C-terminal regions of the beta' subunit thereby facilitating its interaction with the beta and alpha subunits. This is DNA-directed RNA polymerase subunit omega from Xanthomonas axonopodis pv. citri (strain 306).